Consider the following 257-residue polypeptide: Cobalt transport protein CbiM (257 aa).

The N-terminal stretch at M1–A33 is a signal peptide. Helical transmembrane passes span G39–W59, S74–P94, L117–G137, L138–L158, A171–L191, and L214–W234.

It belongs to the CbiM family. Forms an energy-coupling factor (ECF) transporter complex composed of an ATP-binding protein (A component, CbiO), a transmembrane protein (T component, CbiQ) and 2 possible substrate-capture proteins (S components, CbiM and CbiN) of unknown stoichimetry.

It is found in the cell inner membrane. It functions in the pathway cofactor biosynthesis; adenosylcobalamin biosynthesis. Its function is as follows. Part of the energy-coupling factor (ECF) transporter complex CbiMNOQ involved in cobalt import. The sequence is that of Cobalt transport protein CbiM from Thermosynechococcus vestitus (strain NIES-2133 / IAM M-273 / BP-1).